A 345-amino-acid chain; its full sequence is RNA pseudouridine synthase 1 (345 aa).

D134 is an active-site residue.

It belongs to the pseudouridine synthase RluA family.

The catalysed reaction is a uridine in RNA = a pseudouridine in RNA. This Oryza sativa subsp. japonica (Rice) protein is RNA pseudouridine synthase 1.